Here is a 414-residue protein sequence, read N- to C-terminus: Gamma-glutamyl phosphate reductase (414 aa).

Belongs to the gamma-glutamyl phosphate reductase family.

Its subcellular location is the cytoplasm. It carries out the reaction L-glutamate 5-semialdehyde + phosphate + NADP(+) = L-glutamyl 5-phosphate + NADPH + H(+). It participates in amino-acid biosynthesis; L-proline biosynthesis; L-glutamate 5-semialdehyde from L-glutamate: step 2/2. Functionally, catalyzes the NADPH-dependent reduction of L-glutamate 5-phosphate into L-glutamate 5-semialdehyde and phosphate. The product spontaneously undergoes cyclization to form 1-pyrroline-5-carboxylate. This Clostridium botulinum (strain Eklund 17B / Type B) protein is Gamma-glutamyl phosphate reductase.